The primary structure comprises 218 residues: Small ribosomal subunit protein uS3c (218 aa).

Residues 47-118 enclose the KH type-2 domain; it reads VRRHMKNYSN…KLNISIAKVA (72 aa).

This sequence belongs to the universal ribosomal protein uS3 family. In terms of assembly, part of the 30S ribosomal subunit.

The protein localises to the plastid. Its subcellular location is the chloroplast. This chain is Small ribosomal subunit protein uS3c (rps3), found in Ginkgo biloba (Ginkgo).